The primary structure comprises 182 residues: MADCDSVTNSPLATATATLHTNRGDIKIALFGNHAPKTVANFVGLAQGTKDYSTQNASGGPSGPFYDGAVFHRVIQGFMIQGGDPTGTGRGGPGYKFADEFHPELQFDKPYLLAMANAGPGTNGSQFFITVGKTPHLNRRHTIFGEVIDAESQRVVEAISKTATDGNDRPTDPVVIESITIS.

The PPIase cyclophilin-type domain maps to 13 to 181 (ATATATLHTN…DPVVIESITI (169 aa)).

It belongs to the cyclophilin-type PPIase family.

The protein resides in the cytoplasm. The enzyme catalyses [protein]-peptidylproline (omega=180) = [protein]-peptidylproline (omega=0). Functionally, PPIases accelerate the folding of proteins. It catalyzes the cis-trans isomerization of proline imidic peptide bonds in oligopeptides. This Mycobacterium bovis (strain ATCC BAA-935 / AF2122/97) protein is Probable peptidyl-prolyl cis-trans isomerase A (ppiA).